The following is a 247-amino-acid chain: MAGHSKWANTKHRKAAQDAKRGKIFTKVIRELVTAAKLGGGDAGSNPRLRAAMDKALANNMTRDTMNRAIARGVGGDDDSNMETIIYEGYGPGGTAVMVECLSDNRNRTVSEVRHAFTKTGGNLGTDGSVAYLFTKKGVISYAPGLDEDAVMDAALEAGADDVMTYDDGAIDVFTAWENMGAVKDVLDAAGLQADSAEVTMIPSTKADMDAETAPKLLRLIDMLEDCDDVQEVYHNGEISDEVAETL.

Positions 1–20 (MAGHSKWANTKHRKAAQDAK) are disordered.

This sequence belongs to the TACO1 family.

It is found in the cytoplasm. This is Probable transcriptional regulatory protein ETA_14870 from Erwinia tasmaniensis (strain DSM 17950 / CFBP 7177 / CIP 109463 / NCPPB 4357 / Et1/99).